A 356-amino-acid polypeptide reads, in one-letter code: DNA polymerase IV (356 aa).

Positions 7 to 188 (IIHIDMDCFY…LPLKKISGVG (182 aa)) constitute a UmuC domain. Positions 11 and 106 each coordinate Mg(2+). Glutamate 107 is an active-site residue.

It belongs to the DNA polymerase type-Y family. In terms of assembly, monomer. The cofactor is Mg(2+).

The protein localises to the cytoplasm. It carries out the reaction DNA(n) + a 2'-deoxyribonucleoside 5'-triphosphate = DNA(n+1) + diphosphate. Its function is as follows. Poorly processive, error-prone DNA polymerase involved in untargeted mutagenesis. Copies undamaged DNA at stalled replication forks, which arise in vivo from mismatched or misaligned primer ends. These misaligned primers can be extended by PolIV. Exhibits no 3'-5' exonuclease (proofreading) activity. May be involved in translesional synthesis, in conjunction with the beta clamp from PolIII. The polypeptide is DNA polymerase IV (Glaesserella parasuis serovar 5 (strain SH0165) (Haemophilus parasuis)).